Here is a 211-residue protein sequence, read N- to C-terminus: LexA repressor (211 aa).

The segment at residues 27 to 47 (QTEIARAFGFKGVRAVQHHLD) is a DNA-binding region (H-T-H motif). Residues Ser131 and Lys168 each act as for autocatalytic cleavage activity in the active site.

Belongs to the peptidase S24 family. Homodimer.

It carries out the reaction Hydrolysis of Ala-|-Gly bond in repressor LexA.. Functionally, represses a number of genes involved in the response to DNA damage (SOS response), including recA and lexA. In the presence of single-stranded DNA, RecA interacts with LexA causing an autocatalytic cleavage which disrupts the DNA-binding part of LexA, leading to derepression of the SOS regulon and eventually DNA repair. The chain is LexA repressor from Xylella fastidiosa (strain M23).